We begin with the raw amino-acid sequence, 277 residues long: Ribonuclease HII (277 aa).

A disordered region spans residues 1-32; that stretch reads MIRNQANKPGRAKAATAARKSPLTKSAAKPAA. The segment covering 20–32 has biased composition (low complexity); that stretch reads KSPLTKSAAKPAA. The RNase H type-2 domain occupies 64 to 252; the sequence is WPVAGCDEAG…VVAARRKHQP (189 aa). 3 residues coordinate a divalent metal cation: D70, E71, and D161.

Belongs to the RNase HII family. Mn(2+) is required as a cofactor. Mg(2+) serves as cofactor.

The protein resides in the cytoplasm. The enzyme catalyses Endonucleolytic cleavage to 5'-phosphomonoester.. In terms of biological role, endonuclease that specifically degrades the RNA of RNA-DNA hybrids. This chain is Ribonuclease HII, found in Bradyrhizobium sp. (strain ORS 278).